The chain runs to 554 residues: MKKILIIILFIIIFIVLIYSGLWFVIMFSLSHSINQKYSGVHLNIGKGNNNPHQQYLVKFSKVQPYGFPFKLGIMVINWQEESINRAIEFTKPINIGYDLLGQKLFINFSGEALGKFKPVQRGFGVKFYNENCILSAKIPLNLKLFKMVLLKKNLFEFLNLIENIKFISDKTQIFDLVDNQKLYEEDHTILTMLVDKRQYYTSKQDFLNNIPQKLEFYYETEIIQSNLEDRIIPAGLLLYRPAWNNNFKFSGNFLISTSSLHFKDIAKDLTIKVNNAKINSNNFENNMNLLYKGKLNDFGNSNIHLSIESQFKLKPGFIIGFLEFLKKNYDKQTYLLKFSDNKIYKNFNNELVYILNNNKPYNFSILEDRPYHFNFNINLVTELKKLTRVQINTLSLYSNTSGFNITNETIINDLKDSYTKGIIVINNYSKIIEILSFYIYGVGSFKNLSKESQIVHIEALQSFLKTISDHPNSSNLIDTSIKYEFNLSDLNKAKIGNIDDINKLIPLYYLSLYQAAVKKMEPGANVKEKILELIPSINQKILEECVLSDIVTQ.

The N-terminal stretch at 1–33 is a signal peptide; it reads MKKILIIILFIIIFIVLIYSGLWFVIMFSLSHS.

This is an uncharacterized protein from Rickettsia prowazekii (strain Madrid E).